A 103-amino-acid chain; its full sequence is Large ribosomal subunit protein bL21 (103 aa).

This sequence belongs to the bacterial ribosomal protein bL21 family. As to quaternary structure, part of the 50S ribosomal subunit. Contacts protein L20.

In terms of biological role, this protein binds to 23S rRNA in the presence of protein L20. The polypeptide is Large ribosomal subunit protein bL21 (Pseudomonas syringae pv. tomato (strain ATCC BAA-871 / DC3000)).